Reading from the N-terminus, the 124-residue chain is Holo-[acyl-carrier-protein] synthase (124 aa).

Asp-8 and Glu-56 together coordinate Mg(2+).

It belongs to the P-Pant transferase superfamily. AcpS family. Requires Mg(2+) as cofactor.

It localises to the cytoplasm. It carries out the reaction apo-[ACP] + CoA = holo-[ACP] + adenosine 3',5'-bisphosphate + H(+). Transfers the 4'-phosphopantetheine moiety from coenzyme A to a Ser of acyl-carrier-protein. This Clostridium acetobutylicum (strain ATCC 824 / DSM 792 / JCM 1419 / IAM 19013 / LMG 5710 / NBRC 13948 / NRRL B-527 / VKM B-1787 / 2291 / W) protein is Holo-[acyl-carrier-protein] synthase.